The sequence spans 172 residues: Trypsin inhibitor 1A (172 aa).

2 disulfides stabilise this stretch: Cys40/Cys84 and Cys133/Cys139.

Belongs to the protease inhibitor I3 (leguminous Kunitz-type inhibitor) family.

Its function is as follows. WTI-1B inhibits trypsin stoichiometrically. The sequence is that of Trypsin inhibitor 1A from Psophocarpus tetragonolobus (Winged bean).